The sequence spans 164 residues: Large ribosomal subunit protein bL9 (164 aa).

This sequence belongs to the bacterial ribosomal protein bL9 family.

Functionally, binds to the 23S rRNA. In Psychrobacter sp. (strain PRwf-1), this protein is Large ribosomal subunit protein bL9.